The chain runs to 392 residues: NADH-quinone oxidoreductase subunit D (392 aa).

Belongs to the complex I 49 kDa subunit family. As to quaternary structure, NDH-1 is composed of 14 different subunits. Subunits NuoB, C, D, E, F, and G constitute the peripheral sector of the complex.

Its subcellular location is the cell inner membrane. It catalyses the reaction a quinone + NADH + 5 H(+)(in) = a quinol + NAD(+) + 4 H(+)(out). Its function is as follows. NDH-1 shuttles electrons from NADH, via FMN and iron-sulfur (Fe-S) centers, to quinones in the respiratory chain. The immediate electron acceptor for the enzyme in this species is believed to be ubiquinone. Couples the redox reaction to proton translocation (for every two electrons transferred, four hydrogen ions are translocated across the cytoplasmic membrane), and thus conserves the redox energy in a proton gradient. In Paramagnetospirillum magneticum (strain ATCC 700264 / AMB-1) (Magnetospirillum magneticum), this protein is NADH-quinone oxidoreductase subunit D.